We begin with the raw amino-acid sequence, 338 residues long: Probable tRNA pseudouridine synthase B (338 aa).

Asp-82 serves as the catalytic Nucleophile. One can recognise a PUA domain in the interval 250 to 325 (LPKVWIRDSA…IAVDVDKVFM (76 aa)).

It belongs to the pseudouridine synthase TruB family. Type 2 subfamily.

The catalysed reaction is uridine(55) in tRNA = pseudouridine(55) in tRNA. Its function is as follows. Could be responsible for synthesis of pseudouridine from uracil-55 in the psi GC loop of transfer RNAs. This chain is Probable tRNA pseudouridine synthase B, found in Thermococcus kodakarensis (strain ATCC BAA-918 / JCM 12380 / KOD1) (Pyrococcus kodakaraensis (strain KOD1)).